We begin with the raw amino-acid sequence, 307 residues long: Dihydroorotate dehydrogenase B (NAD(+)), catalytic subunit (307 aa).

FMN is bound by residues Ser-20 and Lys-44–Thr-45. Substrate is bound by residues Lys-44 and Asn-68–Leu-72. The FMN site is built by Asn-98 and Asn-126. Position 126 (Asn-126) interacts with substrate. The active-site Nucleophile is the Cys-129. FMN contacts are provided by Lys-164 and Ile-190. Asn-191 to Thr-192 provides a ligand contact to substrate. Residues Gly-216, Gly-242–Gly-243, and Gly-264–Ser-265 each bind FMN.

Belongs to the dihydroorotate dehydrogenase family. Type 1 subfamily. As to quaternary structure, heterotetramer of 2 PyrK and 2 PyrD type B subunits. Requires FMN as cofactor.

Its subcellular location is the cytoplasm. The catalysed reaction is (S)-dihydroorotate + NAD(+) = orotate + NADH + H(+). Its pathway is pyrimidine metabolism; UMP biosynthesis via de novo pathway; orotate from (S)-dihydroorotate (NAD(+) route): step 1/1. Functionally, catalyzes the conversion of dihydroorotate to orotate with NAD(+) as electron acceptor. This chain is Dihydroorotate dehydrogenase B (NAD(+)), catalytic subunit (pyrD), found in Carboxydothermus hydrogenoformans (strain ATCC BAA-161 / DSM 6008 / Z-2901).